The sequence spans 150 residues: UPF0178 protein BamMC406_1579 (150 aa).

This sequence belongs to the UPF0178 family.

In Burkholderia ambifaria (strain MC40-6), this protein is UPF0178 protein BamMC406_1579.